The primary structure comprises 578 residues: mRNA-decapping enzyme 1B (578 aa).

Residue A2 is modified to N-acetylalanine. S144 and S145 each carry phosphoserine. Disordered stretches follow at residues 187 to 222 and 246 to 265; these read AICD…PEPQ and RTFA…TRPV. Over residues 248–257 the composition is skewed to basic residues; it reads FAHHHHHHHQ. A phosphoserine mark is found at S274 and S335. At T380 the chain carries Phosphothreonine.

This sequence belongs to the DCP1 family. In terms of assembly, interacts with DCP1A.

The protein localises to the cytoplasm. The protein resides in the nucleus. It carries out the reaction a 5'-end (N(7)-methyl 5'-triphosphoguanosine)-ribonucleoside in mRNA + H2O = N(7)-methyl-GDP + a 5'-end phospho-ribonucleoside in mRNA + 2 H(+). Its function is as follows. May play a role in the degradation of mRNAs, both in normal mRNA turnover and in nonsense-mediated mRNA decay. May remove the 7-methyl guanine cap structure from mRNA molecules, yielding a 5'-phosphorylated mRNA fragment and 7m-GDP. The protein is mRNA-decapping enzyme 1B (Dcp1b) of Mus musculus (Mouse).